Here is a 1267-residue protein sequence, read N- to C-terminus: Probable ATP-dependent RNA helicase DHR1 (1267 aa).

3 disordered regions span residues 1 to 67 (MGTY…EPLT), 168 to 233 (YEPK…SNIK), and 255 to 313 (EELK…DQND). Basic and acidic residues-rich tracts occupy residues 7–25 (RFNE…ELKR) and 32–43 (TRQDENDERVEN). Residues 175-192 (EYGEGGSSEDDDGEDDFE) are compositionally biased toward acidic residues. Ser181 is subject to Phosphoserine. Positions 202 to 217 (TDNEEKKSSGFIDHRP) are enriched in basic and acidic residues. The segment covering 264–284 (DEMDFDTTSEDDDEEEDQEEE) has biased composition (acidic residues). Residues 401–580 (MEAIHHNDVV…KTLFPIAPPV (180 aa)) form the Helicase ATP-binding domain. An ATP-binding site is contributed by 414 to 421 (GETGSGKT). The DEAH box motif lies at 516-519 (DEAH). One can recognise a Helicase C-terminal domain in the interval 675 to 858 (DIDFSVQVID…SIVLQMKSMA (184 aa)). 2 disordered regions span residues 693-720 (RYEE…EVLT) and 955-976 (PNPD…PGMD). Positions 695–719 (EEDEGNSGNGEDEEDEEEEGFEEVL) are enriched in acidic residues.

This sequence belongs to the DEAD box helicase family. DEAH subfamily. As to quaternary structure, interacts with snoRNA U3. Component of the ribosomal small subunit (SSU) processome composed of at least 40 protein subunits and snoRNA U3.

It is found in the nucleus. Its subcellular location is the nucleolus. It catalyses the reaction ATP + H2O = ADP + phosphate + H(+). Probable ATP-binding RNA helicase. Required for 18S rRNA synthesis. May play a role in restructuring of the pre-rRNA. This Saccharomyces cerevisiae (strain ATCC 204508 / S288c) (Baker's yeast) protein is Probable ATP-dependent RNA helicase DHR1 (ECM16).